The primary structure comprises 593 residues: MAKESTIRTPIVCVMGHVDHGKTSLLDRIRGSSVVSTEEGEITQHIGATLVPIDAVTRMGGALSKVSVNVPGLLFIDTPGHHAFTTLRARGGALADMAIVVVDINEGFRPQTIEALQILRNYKTPFVIAANKVDRIHGWRVQENQPFLKTFAQQNERVQGMVETKVYELVGKLSDLGFNSERFDRVSDFARNICIVPTSALTGEGLPDILMVLIGLAQRYMTESLKVSADGPGAGTVLEVKEERGLGMTLDLILYDGTLKVGDEIVVAGNDQIIETKVRSLLKPRPMSEILIEERFERVKSVTAAAGIKVAAPKLDGVIAGSPLRAVRSGNRDEVIEQVRREVQDIEVNLSDVGVIIRADTIGALEALSKELEGHQIQVMRATVGPVTRHDVIEAGTIKDPLYSAIIAFNTPVLPDAVDALADTAMSHVSIFEGGVIYQLIDDYVEWRDEKKQELERQKFEKLIMPAKIRILPNCVFRQSNPAVVGVRILGGKLQSGVDLALPNGKKIGRIKQIQAKNETVQEAEAGKEVAISIEGPTVGRQINVDDDLYVDIPERHVKVIEREVIDHLSPSLRETLEEFTTLKRREDPFWGK.

The tr-type G domain occupies 7–221; that stretch reads IRTPIVCVMG…VLIGLAQRYM (215 aa). Residues 16 to 23 are G1; that stretch reads GHVDHGKT. 16–23 contacts GTP; sequence GHVDHGKT. Residues 41–45 are G2; that stretch reads EITQH. The tract at residues 77-80 is G3; the sequence is DTPG. Residues 77 to 81 and 131 to 134 contribute to the GTP site; these read DTPGH and NKVD. The G4 stretch occupies residues 131-134; sequence NKVD. The tract at residues 199 to 201 is G5; the sequence is SAL.

It belongs to the TRAFAC class translation factor GTPase superfamily. Classic translation factor GTPase family. IF-2 subfamily.

Functionally, function in general translation initiation by promoting the binding of the formylmethionine-tRNA to ribosomes. Seems to function along with eIF-2. This is Probable translation initiation factor IF-2 from Methanoculleus marisnigri (strain ATCC 35101 / DSM 1498 / JR1).